A 380-amino-acid polypeptide reads, in one-letter code: GATOR1 complex protein NPRL2 (380 aa).

Residues 1–133 form an interaction with PDPK1 region; sequence MGSGCRIECI…SKQKLVPIMT (133 aa). Residue Arg78 participates in GDP binding. Position 78 is an asymmetric dimethylarginine (Arg78). Residues Lys158 and Lys357 each participate in a glycyl lysine isopeptide (Lys-Gly) (interchain with G-Cter in ubiquitin) cross-link.

Belongs to the NPR2 family. As to quaternary structure, within the GATOR complex, component of the GATOR1 subcomplex, made of DEPDC5, NPRL2 and NPRL3. GATOR1 mediates the strong interaction of the GATOR complex with small GTPases Rag (RagA/RRAGA, RagB/RRAGB, RagC/RRAGC and/or RagD/RRAGD) heterodimers. GATOR1 interacts with GPR155/LYCHOS; interaction takes place in presence of cholesterol and prevents interaction between GATOR1 and KICSTOR. Interacts with PDPK1. In the presence of abundant amino acids, ubiquitinated at Lys-158 and Lys-357 via 'Lys-6'-linked ubiquitination by the WDR24 component of the GATOR2 complex, thereby inhibiting the GATOR1 complex and promoting mTORC1 activation. In terms of processing, asymmetric dimethylation at Arg-78 by PRMT1 inhibits the GTPase activator activity of the GATOR1 complex and consequently inducing timely mTORC1 activation under methionine-sufficient conditions. As to expression, most abundant in skeletal muscle, followed by brain, liver and pancreas, with lower amounts in lung, kidney, placenta and heart. Expressed in the frontal lobe cortex as well as in the temporal, parietal, and occipital lobes. Expressed in most lung cancer cell lines tested.

The protein resides in the lysosome membrane. In terms of biological role, catalytic component of the GATOR1 complex, a multiprotein complex that functions as an inhibitor of the amino acid-sensing branch of the mTORC1 pathway. In response to amino acid depletion, the GATOR1 complex has GTPase activating protein (GAP) activity and strongly increases GTP hydrolysis by RagA/RRAGA (or RagB/RRAGB) within heterodimeric Rag complexes, thereby turning them into their inactive GDP-bound form, releasing mTORC1 from lysosomal surface and inhibiting mTORC1 signaling. In the presence of abundant amino acids, the GATOR1 complex is ubiquitinated and inhibited by GATOR2. Within the GATOR1 complex, NPRL2 constitutes the catalytic subunit that mediates the GTPase activator activity and under methionine-sufficient conditions, the GTPase activator activity is inhibited by PRMT1 through methylation and consequently inducing timely mTORC1 activation. Functionally, suppresses Src-dependent tyrosine phosphorylation and activation of PDPK1 and its downstream signaling. Down-regulates PDPK1 kinase activity by interfering with tyrosine phosphorylation at 'Tyr-9', 'Tyr-373' and 'Tyr-376' residues. May act as a tumor suppressor. Suppresses cell growth and enhances sensitivity to various anticancer drugs. The protein is GATOR1 complex protein NPRL2 of Homo sapiens (Human).